We begin with the raw amino-acid sequence, 130 residues long: Small ribosomal subunit protein uS9 (130 aa).

This sequence belongs to the universal ribosomal protein uS9 family.

In Neisseria meningitidis serogroup C (strain 053442), this protein is Small ribosomal subunit protein uS9.